The following is a 203-amino-acid chain: Glycerol-3-phosphate acyltransferase (203 aa).

A run of 5 helical transmembrane segments spans residues 5–25, 55–75, 84–104, 118–138, and 159–179; these read IYIA…GLIL, LAAA…IVAA, IAAN…LFPV, IGVL…MWLA, and IFLW…LTLL.

This sequence belongs to the PlsY family. In terms of assembly, probably interacts with PlsX.

It is found in the cell inner membrane. The enzyme catalyses an acyl phosphate + sn-glycerol 3-phosphate = a 1-acyl-sn-glycero-3-phosphate + phosphate. It participates in lipid metabolism; phospholipid metabolism. Functionally, catalyzes the transfer of an acyl group from acyl-phosphate (acyl-PO(4)) to glycerol-3-phosphate (G3P) to form lysophosphatidic acid (LPA). This enzyme utilizes acyl-phosphate as fatty acyl donor, but not acyl-CoA or acyl-ACP. The chain is Glycerol-3-phosphate acyltransferase from Rhodopseudomonas palustris (strain ATCC BAA-98 / CGA009).